Reading from the N-terminus, the 142-residue chain is Hemoglobin subunit alpha (142 aa).

The 141-residue stretch at 2-142 (VLSAADKGNV…VSTVLTSKYR (141 aa)) folds into the Globin domain. Ser-4 is subject to Phosphoserine. N6-succinyllysine occurs at positions 8 and 12. Lys-17 is subject to N6-acetyllysine; alternate. Lys-17 is subject to N6-succinyllysine; alternate. Tyr-25 is subject to Phosphotyrosine. Ser-36 carries the phosphoserine modification. The residue at position 41 (Lys-41) is an N6-succinyllysine. Residue Ser-50 is modified to Phosphoserine. An O2-binding site is contributed by His-59. His-88 lines the heme b pocket. Phosphoserine is present on Ser-103. Thr-109 is subject to Phosphothreonine. Phosphoserine is present on Ser-125. Phosphothreonine occurs at positions 135 and 138. Ser-139 carries the post-translational modification Phosphoserine.

This sequence belongs to the globin family. In terms of assembly, heterotetramer of two alpha chains and two beta chains. As to expression, red blood cells.

In terms of biological role, involved in oxygen transport from the lung to the various peripheral tissues. Functionally, hemopressin acts as an antagonist peptide of the cannabinoid receptor CNR1. Hemopressin-binding efficiently blocks cannabinoid receptor CNR1 and subsequent signaling. This chain is Hemoglobin subunit alpha (HBA), found in Bos gaurus frontalis (Domestic gayal).